The following is a 66-amino-acid chain: Large ribosomal subunit protein bL28 (66 aa).

The tract at residues 1–26 is disordered; it reads MAKDAITGARTRFGNQRSHALNSSRR. Positions 13 to 25 are enriched in polar residues; the sequence is FGNQRSHALNSSR.

It belongs to the bacterial ribosomal protein bL28 family.

In Leuconostoc citreum (strain KM20), this protein is Large ribosomal subunit protein bL28.